A 787-amino-acid polypeptide reads, in one-letter code: MGSLHSIFCVCLILLCIFKENSIVGAINSARMVELRETSRRLFYHGYNNYMQFAFPNDELAPLSCEGLGPDYENPNNIGVNDVRGDYLLTLVDVLDTLVVLGDREGFQDAVDKVIHHINFERDTKVQVFEATIRILGGLLSSHIFASEEKYGFQIPLYKGELLTLATELAERLLPAFRTPTGIPFARINLMKGVAYREVTENCAAAASSLVLEFSMLTALTGNNKFKASAENAFFSVWKRRSGIGLLGNSIDVLSGRWIYPVSGVGAGIDSFYEYAFKSYIFLGDPRYLEVWQKSLESLRHYTASLNEYYYQNVYSANGMVMSRWVDSLSAYFPGLLVLAGELELAKKMHLYYFSIYLKFGQLPERYNLYTKSIELNGYPLRPEFAESTYYLYRATKDVFYLHVGELLLSNIENHLWTPCGFAAVENLEKYTLSNRMESFFLSETLKYLFLLFDDDNPIHRSHHDFIFTTEGHLFPVTNQTRLSTSQRIYDGGEVCVAEDYDRSKWPMLYSLIASRDDYDYVSHLVGIDNKAIPSYLIDPSGVCKRPEYSDGFELLYGSALVSPIKSVERVTNNVYISDIIGNKLKFVQKEGSNSLFLYTAGAESINENDTVFLTDPDYETFTRPDALYFDRTIAQLENPNSGQKTFGKFLQFDNDNSLPSKVFKTVLLNNSMCQKPSDTLDKDTAYIAPLGNCSWVQQAKNTNKAGLLILITDGEFINPLENIHSQNSLFNWVKPYIPPTILLKNENNFVSKWANVSVRQSDFDAPSYFQGTPVSNLYLCLKCINS.

Residues 1-22 form the signal peptide; the sequence is MGSLHSIFCVCLILLCIFKENS. Residues Asn-479, Asn-609, Asn-670, Asn-693, and Asn-756 are each glycosylated (N-linked (GlcNAc...) asparagine).

It belongs to the glycosyl hydrolase 47 family.

The protein resides in the endoplasmic reticulum lumen. Its function is as follows. Alpha-mannosidase-like protein involved in endoplasmic reticulum-associated degradation (ERAD). Delivers misfolded glycoproteins to proteasomes. It lacks mannosidase activity. This chain is ER degradation-enhancing alpha-mannosidase-like protein 1 (mnl1), found in Schizosaccharomyces pombe (strain 972 / ATCC 24843) (Fission yeast).